Reading from the N-terminus, the 88-residue chain is Large ribosomal subunit protein bL27 (88 aa).

Residues 1-21 (MAHKKGASSSRNGRDSNAQRL) are disordered. Polar residues predominate over residues 7–19 (ASSSRNGRDSNAQ).

The protein belongs to the bacterial ribosomal protein bL27 family.

The protein is Large ribosomal subunit protein bL27 of Frankia casuarinae (strain DSM 45818 / CECT 9043 / HFP020203 / CcI3).